The sequence spans 458 residues: Probable asparagine--tRNA ligase, cytoplasmic (458 aa).

Belongs to the class-II aminoacyl-tRNA synthetase family.

It localises to the cytoplasm. The enzyme catalyses tRNA(Asn) + L-asparagine + ATP = L-asparaginyl-tRNA(Asn) + AMP + diphosphate + H(+). The polypeptide is Probable asparagine--tRNA ligase, cytoplasmic (Enterocytozoon bieneusi (strain H348) (Microsporidian parasite)).